The following is a 165-amino-acid chain: Type IV major pilin protein PilE1 (165 aa).

The propeptide at 1-7 (MNTLQKG) is leader sequence. Phe8 is subject to N-methylphenylalanine. Residues 8–28 (FTLIELMIVIAIVGILAAVAL) form a helical membrane-spanning segment. An O-linked (DADDGlc) serine glycan is attached at Ser70. At Ser75 the chain carries O-(2-aminoethylphosphoryl)serine; alternate. An O-(2-cholinephosphoryl)serine; alternate modification is found at Ser75. Phosphoserine; alternate is present on Ser75. An O-(sn-1-glycerophosphoryl)serine; partial modification is found at Ser101. Residues Cys128 and Cys158 are joined by a disulfide bond. The segment covering 137 to 153 (DDTVADAKDGKEIDTKH) has biased composition (basic and acidic residues). Residues 137–165 (DDTVADAKDGKEIDTKHLPSTCRDNFDAK) are disordered.

The protein belongs to the N-Me-Phe pilin family. As to quaternary structure, the pili are polar flexible filaments of about 5.4 nanometers diameter and 2.5 micrometers average length; they consist of only a single polypeptide chain arranged in a helical configuration of five subunits per turn in the assembled pilus. Post-translationally, the O-linked glycan identified as Gal-GlcNAc disaccharide in PubMed:7477282 and PubMed:10048019 is now identified as either a hexosyl-diacetamidotrideoxyhexoside (DATDHex) by mass spectrometry in PubMed:15249686, or alpha-D-galactopyranosyl-(1-&gt;3)-2,4-diacetamido-2,4-dideoxy-beta-D-glucopyranoside (DADDGlc) by X-ray diffraction in PubMed:16949362. It is not clear whether there is a chemical difference in the glycosylation of the two derivatives of strain MS11 used in these experiments, or not. In terms of processing, in some MS11 derivative strains, Ser-75 is modified to O-(2-aminoethylphosphoryl)serine, and in some other derivatives that can be secondarily modified to O-(2-cholinephosphoryl)serine by N-methylation.

It is found in the fimbrium. It localises to the membrane. In terms of biological role, major component of the type IV pilus (T4P) that plays a role in cellular adherence, microcolony formation, resistance to neutrophil mediated killing, twitching motility as well as transformation. Mediates the attachment and the formation of bacterial microcolonies on host epithelial cells. Mechanistically, pili retractation induces host NF-kappa-B activation in infected cells, which is temporally associated with the formation of gonococcal microcolonies. This Neisseria gonorrhoeae protein is Type IV major pilin protein PilE1 (pilE1).